Reading from the N-terminus, the 150-residue chain is D-galactose-binding lectin (150 aa).

D-galactose is bound by residues histidine 16 and glycine 19. A glycan (N-linked (GlcNAc...) asparagine) is linked at asparagine 26. D-galactose is bound by residues aspartate 35–histidine 37, histidine 64, and glycine 67. N-linked (GlcNAc...) asparagine glycosylation is present at asparagine 74. D-galactose contacts are provided by residues aspartate 83–histidine 85, histidine 108, and glycine 111. Asparagine 118 is a glycosylation site (N-linked (GlcNAc...) asparagine). Aspartate 127–histidine 129 is a binding site for D-galactose.

Oligomerizes in solution. In terms of processing, the N-terminus is blocked. As to expression, expressed in mantle. Expressed 51 and 1.6 fold in mantle and gonads, respectively, relative to that in hemocytes. Expressed at a much lower level in other tissues tested including gill, muscle and hepatopancreas.

With respect to regulation, hemagglutinating activity does not require Ca(2+) ions. Hemagglutinating activity is inhibited by porcine stomach mucin (PSM), bovine submaxillary mucin (BSM) and fetuin. Agglutination of V.proteolyticus bacteria is inhibited by D-galactose, but not by D-glucose. Fungal binding is inhibited by D-galactose, but not by pathogen-associated molecular patterns (PAMPs) including lipopolysaccharide (LPS), peptidoglycan and beta-glucan. Its function is as follows. D-galactose-binding lectin. Binds both alpha and beta anomer of galactose (Gal). Binds strongly to branched beta-Gal-terminated glycans and weakly to unbranched glycans with alpha-Gal on the end of chains. Has strong affinity for both Gal and GalNAc. Binds glycoproteins containing mucin-type chains. Has hemagglutinating activity towards human group A erythrocytes. Has hemagglutinating activity towards rabbit erythrocytes. Agglutinates V.proteolyticus bacteria. Binds strongly to fungi including species from genera Aspergillus, Alternaria, Fusarium and Haematonectria, and to a lesser extent to fungi from genera Trichoderma. Decreases conidia germination and hyphal growth of fungi. At high concentration, stimulates secretion of cytokines TNF-alpha and IFN-gamma from human peripheral blood cells, and at low concentration reduces hyperexpression of cytokine IL-10 in these cells, indicative of immunomodulatory capability. However, has no effect on IL-4 production. Recognizes pathogen-associated molecular patterns (PAMPs) and binds to peptidoglycan from S.aureus, but has only little binding to beta-1,3-glucan from E.gracilis and lipopolysaccharide (LPS) from E.coli. May be involved in innate immunity acting as an antibacterial or antifungal agent recognizing carbohydrate ligands on the surface of pathogens. In Mytilus trossulus (Blue mussel), this protein is D-galactose-binding lectin.